A 113-amino-acid polypeptide reads, in one-letter code: Heavy metal-associated isoprenylated plant protein 15 (113 aa).

An HMA domain is found at 1–65 (MIVWMGVYDQ…KWGKAKLTLY (65 aa)). Positions 69–89 (DALKEAKIAEAKQKREEIERE) form a coiled coil. Cys-110 carries the cysteine methyl ester modification. Cys-110 carries the S-farnesyl cysteine lipid modification. A propeptide spans 111–113 (VIC) (removed in mature form).

This sequence belongs to the HIPP family. In terms of tissue distribution, expressed in embryo sacs.

In terms of biological role, probable heavy-metal-binding protein. The protein is Heavy metal-associated isoprenylated plant protein 15 of Arabidopsis thaliana (Mouse-ear cress).